A 155-amino-acid chain; its full sequence is U4/U6.U5 small nuclear ribonucleoprotein 27 kDa protein (155 aa).

2 stretches are compositionally biased toward basic residues: residues 1–31 (MGRS…RERS) and 39–59 (RRSR…RHRS). The disordered stretch occupies residues 1 to 97 (MGRSRSRSPR…ITEEDLEGKT (97 aa)). S61 and S65 each carry phosphoserine. The segment covering 66–97 (RLKERRDEEKKETKETKSKERQITEEDLEGKT) has biased composition (basic and acidic residues). A phosphoserine mark is found at S111, S114, and S132.

Belongs to the SNUT3 family. In terms of assembly, part of a tri-snRNP complex. Post-translationally, phosphorylated in vitro by snRNP-associated protein kinase.

The protein resides in the nucleus. In terms of biological role, may play a role in mRNA splicing. The protein is U4/U6.U5 small nuclear ribonucleoprotein 27 kDa protein (SNRNP27) of Homo sapiens (Human).